Consider the following 725-residue polypeptide: Phosphoribosylformylglycinamidine synthase subunit PurL (725 aa).

Histidine 42 is an active-site residue. 2 residues coordinate ATP: tyrosine 45 and lysine 84. A Mg(2+)-binding site is contributed by glutamate 86. Residues 87–90 (SHNH) and arginine 109 each bind substrate. Histidine 88 serves as the catalytic Proton acceptor. Residue aspartate 110 participates in Mg(2+) binding. Glutamine 237 is a binding site for substrate. Aspartate 265 contributes to the Mg(2+) binding site. A substrate-binding site is contributed by 309–311 (ESQ). ATP is bound by residues aspartate 491 and glycine 528. Mg(2+) is bound at residue asparagine 529. Substrate is bound at residue serine 531.

This sequence belongs to the FGAMS family. In terms of assembly, monomer. Part of the FGAM synthase complex composed of 1 PurL, 1 PurQ and 2 PurS subunits.

The protein localises to the cytoplasm. The enzyme catalyses N(2)-formyl-N(1)-(5-phospho-beta-D-ribosyl)glycinamide + L-glutamine + ATP + H2O = 2-formamido-N(1)-(5-O-phospho-beta-D-ribosyl)acetamidine + L-glutamate + ADP + phosphate + H(+). It participates in purine metabolism; IMP biosynthesis via de novo pathway; 5-amino-1-(5-phospho-D-ribosyl)imidazole from N(2)-formyl-N(1)-(5-phospho-D-ribosyl)glycinamide: step 1/2. Its function is as follows. Part of the phosphoribosylformylglycinamidine synthase complex involved in the purines biosynthetic pathway. Catalyzes the ATP-dependent conversion of formylglycinamide ribonucleotide (FGAR) and glutamine to yield formylglycinamidine ribonucleotide (FGAM) and glutamate. The FGAM synthase complex is composed of three subunits. PurQ produces an ammonia molecule by converting glutamine to glutamate. PurL transfers the ammonia molecule to FGAR to form FGAM in an ATP-dependent manner. PurS interacts with PurQ and PurL and is thought to assist in the transfer of the ammonia molecule from PurQ to PurL. This chain is Phosphoribosylformylglycinamidine synthase subunit PurL, found in Campylobacter lari (strain RM2100 / D67 / ATCC BAA-1060).